The chain runs to 147 residues: SsrA-binding protein (147 aa).

A disordered region spans residues 124–147 (KKHDKRQDIKDRDWARKQARQDFS). Basic and acidic residues predominate over residues 128–147 (KRQDIKDRDWARKQARQDFS).

This sequence belongs to the SmpB family.

Its subcellular location is the cytoplasm. Required for rescue of stalled ribosomes mediated by trans-translation. Binds to transfer-messenger RNA (tmRNA), required for stable association of tmRNA with ribosomes. tmRNA and SmpB together mimic tRNA shape, replacing the anticodon stem-loop with SmpB. tmRNA is encoded by the ssrA gene; the 2 termini fold to resemble tRNA(Ala) and it encodes a 'tag peptide', a short internal open reading frame. During trans-translation Ala-aminoacylated tmRNA acts like a tRNA, entering the A-site of stalled ribosomes, displacing the stalled mRNA. The ribosome then switches to translate the ORF on the tmRNA; the nascent peptide is terminated with the 'tag peptide' encoded by the tmRNA and targeted for degradation. The ribosome is freed to recommence translation, which seems to be the essential function of trans-translation. This is SsrA-binding protein from Neorickettsia sennetsu (strain ATCC VR-367 / Miyayama) (Ehrlichia sennetsu).